A 482-amino-acid chain; its full sequence is tRNA sulfurtransferase (482 aa).

A THUMP domain is found at 61–165 (LAIRDALTRI…DDRLLLIKGR (105 aa)). ATP is bound by residues 183–184 (LI), lysine 265, glycine 287, and glutamine 296. The cysteines at positions 344 and 456 are disulfide-linked. The 79-residue stretch at 404-482 (FGPNDVILDI…GFNNVKVYRP (79 aa)) folds into the Rhodanese domain. Residue cysteine 456 is the Cysteine persulfide intermediate of the active site.

This sequence belongs to the ThiI family.

It localises to the cytoplasm. It catalyses the reaction [ThiI sulfur-carrier protein]-S-sulfanyl-L-cysteine + a uridine in tRNA + 2 reduced [2Fe-2S]-[ferredoxin] + ATP + H(+) = [ThiI sulfur-carrier protein]-L-cysteine + a 4-thiouridine in tRNA + 2 oxidized [2Fe-2S]-[ferredoxin] + AMP + diphosphate. It carries out the reaction [ThiS sulfur-carrier protein]-C-terminal Gly-Gly-AMP + S-sulfanyl-L-cysteinyl-[cysteine desulfurase] + AH2 = [ThiS sulfur-carrier protein]-C-terminal-Gly-aminoethanethioate + L-cysteinyl-[cysteine desulfurase] + A + AMP + 2 H(+). The protein operates within cofactor biosynthesis; thiamine diphosphate biosynthesis. Catalyzes the ATP-dependent transfer of a sulfur to tRNA to produce 4-thiouridine in position 8 of tRNAs, which functions as a near-UV photosensor. Also catalyzes the transfer of sulfur to the sulfur carrier protein ThiS, forming ThiS-thiocarboxylate. This is a step in the synthesis of thiazole, in the thiamine biosynthesis pathway. The sulfur is donated as persulfide by IscS. The protein is tRNA sulfurtransferase of Shigella boydii serotype 4 (strain Sb227).